The following is a 280-amino-acid chain: Meiotic driver wtf35 (280 aa).

Over residues 1–29 the composition is skewed to basic and acidic residues; sequence MKNKDYPLRTSMDELSTKNDNEIDLEKGP. 2 disordered regions span residues 1–49 and 64–100; these read MKNK…DLNN and NKST…GTTD. 4 helical membrane-spanning segments follow: residues 105-125, 142-162, 184-204, and 218-238; these read FLIK…PAVC, WTLI…SWYF, IPMA…PRVA, and SLAD…VETV.

The protein belongs to the WTF family. Homomer. Forms protein aggregates. The two isoforms can interact with each other and with themselves. High sequence similarity is required for their interaction.

The protein localises to the spore membrane. Its subcellular location is the vacuole membrane. It localises to the ascus epiplasm. It is found in the cytoplasm. The protein resides in the endoplasmic reticulum membrane. In terms of biological role, promotes unequal transmission of alleles from the parental zygote to progeny spores by acting as poison/antidote system where the poison and antidote proteins are produced from the same locus; the poison component is trans-acting and targets all spores within an ascus whereas the antidote component is spore-specific, leading to poisoning of all progeny that do not inherit the allele. Functionally, localizes isoform 2 to the vacuole thereby facilitating its degradation. Its function is as follows. Forms toxic aggregates that disrupt spore maturation. This Schizosaccharomyces pombe (Fission yeast) protein is Meiotic driver wtf35.